We begin with the raw amino-acid sequence, 156 residues long: Ribonuclease H (156 aa).

An RNase H type-1 domain is found at 3–144 (ERKLIHIFTD…CDILARSAAE (142 aa)). Residues D12, E50, D72, and D136 each contribute to the Mg(2+) site.

Belongs to the RNase H family. Monomer. The cofactor is Mg(2+).

It localises to the cytoplasm. The catalysed reaction is Endonucleolytic cleavage to 5'-phosphomonoester.. Endonuclease that specifically degrades the RNA of RNA-DNA hybrids. This chain is Ribonuclease H, found in Shewanella putrefaciens (strain CN-32 / ATCC BAA-453).